We begin with the raw amino-acid sequence, 295 residues long: Bifunctional protein FolD (295 aa).

Residues 165–167, S192, and I233 each bind NADP(+); that span reads GRG.

This sequence belongs to the tetrahydrofolate dehydrogenase/cyclohydrolase family. Homodimer.

It carries out the reaction (6R)-5,10-methylene-5,6,7,8-tetrahydrofolate + NADP(+) = (6R)-5,10-methenyltetrahydrofolate + NADPH. It catalyses the reaction (6R)-5,10-methenyltetrahydrofolate + H2O = (6R)-10-formyltetrahydrofolate + H(+). It functions in the pathway one-carbon metabolism; tetrahydrofolate interconversion. Its function is as follows. Catalyzes the oxidation of 5,10-methylenetetrahydrofolate to 5,10-methenyltetrahydrofolate and then the hydrolysis of 5,10-methenyltetrahydrofolate to 10-formyltetrahydrofolate. This is Bifunctional protein FolD from Tropheryma whipplei (strain TW08/27) (Whipple's bacillus).